The following is a 550-amino-acid chain: Hydroxylamine reductase (550 aa).

Cys-3, Cys-6, Cys-18, and Cys-25 together coordinate [2Fe-2S] cluster. His-249, Glu-273, Cys-317, Cys-405, Cys-433, Cys-458, Glu-492, and Lys-494 together coordinate hybrid [4Fe-2O-2S] cluster. Cys-405 carries the cysteine persulfide modification.

This sequence belongs to the HCP family. It depends on [2Fe-2S] cluster as a cofactor. Hybrid [4Fe-2O-2S] cluster is required as a cofactor.

The protein resides in the cytoplasm. The catalysed reaction is A + NH4(+) + H2O = hydroxylamine + AH2 + H(+). Its function is as follows. Catalyzes the reduction of hydroxylamine to form NH(3) and H(2)O. The sequence is that of Hydroxylamine reductase from Salmonella choleraesuis (strain SC-B67).